Consider the following 436-residue polypeptide: Carboxypeptidase A5 (436 aa).

A signal peptide spans methionine 1–glycine 33. Residues glutamine 34–arginine 126 constitute a propeptide, activation peptide. The Peptidase M14 domain occupies serine 138–threonine 431. The Zn(2+) site is built by histidine 196 and glutamate 199. Substrate is bound by residues histidine 196–glutamate 199, arginine 254, and asparagine 271–arginine 272. Residues cysteine 265 and cysteine 288 are joined by a disulfide bond. Histidine 323 serves as a coordination point for Zn(2+). Substrate contacts are provided by residues serine 324–tyrosine 325 and tyrosine 375. Catalysis depends on glutamate 397, which acts as the Proton donor/acceptor.

Belongs to the peptidase M14 family. It depends on Zn(2+) as a cofactor.

It is found in the secreted. The polypeptide is Carboxypeptidase A5 (CPA5) (Macaca fascicularis (Crab-eating macaque)).